A 727-amino-acid polypeptide reads, in one-letter code: Probable glutamate carboxypeptidase ARB_02390 (727 aa).

The N-terminal stretch at 1-18 is a signal peptide; it reads MIVKSLSLLALAAATVEG. Residues Asn-60 and Asn-80 are each glycosylated (N-linked (GlcNAc...) asparagine). One can recognise a PA domain in the interval 158 to 296; the sequence is ATAEYVYVGR…ISQLDAQPIL (139 aa). Arg-197 serves as a coordination point for substrate. N-linked (GlcNAc...) asparagine glycosylation is present at Asn-223. The interval 255-279 is disordered; it reads FPGDPTTPGYPSRPDSPRKDKSPVV. Positions 261 and 264 each coordinate Ca(2+). The interval 266-565 is NAALADase; sequence SRPDSPRKDK…QFLGLLGYHL (300 aa). Asn-310, Asn-319, and Asn-353 each carry an N-linked (GlcNAc...) asparagine glycan. Residue His-366 participates in Zn(2+) binding. The active-site For NAALADase activity is Glu-414. Glu-415 is a binding site for Zn(2+). Ca(2+)-binding residues include Glu-423 and Glu-426. Asp-443 is a Zn(2+) binding site. Substrate contacts are provided by residues 516 to 518 and Tyr-530; that span reads TGA. His-531 contacts Zn(2+). Residue Ser-604 is the Charge relay system of the active site. Residue Asn-614 is glycosylated (N-linked (GlcNAc...) asparagine). His-665 (charge relay system) is an active-site residue. A substrate-binding site is contributed by 675 to 676; it reads GY. A glycan (N-linked (GlcNAc...) asparagine) is linked at Asn-692.

The protein belongs to the peptidase M28 family. M28B subfamily. It depends on Zn(2+) as a cofactor.

It localises to the secreted. It carries out the reaction Release of an unsubstituted, C-terminal glutamyl residue, typically from Ac-Asp-Glu or folylpoly-gamma-glutamates.. Functionally, has both folate hydrolase and N-acetylated-alpha-linked-acidic dipeptidase (NAALADase) activity. Also exhibits a dipeptidyl-peptidase IV type activity. In Arthroderma benhamiae (strain ATCC MYA-4681 / CBS 112371) (Trichophyton mentagrophytes), this protein is Probable glutamate carboxypeptidase ARB_02390.